The sequence spans 729 residues: Probable pre-mRNA-splicing factor ATP-dependent RNA helicase DEAH3 (729 aa).

Positions 75-244 constitute a Helicase ATP-binding domain; it reads LNTLNSNQTL…FSGAPLMKVP (170 aa). 88 to 95 provides a ligand contact to ATP; sequence GETGSGKT. The DEAH box signature appears at 191–194; that stretch reads DEAH. In terms of domain architecture, Helicase C-terminal spans 269-449; sequence TVVQIHMCEP…NTVLTLKKLG (181 aa).

This sequence belongs to the DEAD box helicase family. DEAH subfamily. PRP43 sub-subfamily.

The catalysed reaction is ATP + H2O = ADP + phosphate + H(+). May be involved in pre-mRNA splicing. The protein is Probable pre-mRNA-splicing factor ATP-dependent RNA helicase DEAH3 of Arabidopsis thaliana (Mouse-ear cress).